The chain runs to 933 residues: Exosome complex exonuclease RRP44 homolog A (933 aa).

The PINc domain occupies 50-163; sequence KIIVVDTNVV…LVTNDRENKR (114 aa). Residues 217–321 form the CSD1 domain; sequence QEHKPMSEIT…NVDDAPRTSN (105 aa). Residues 296–336 are disordered; it reads AEEDDEEDDTVHLAPDNVDDAPRTSNLSHETSGDKNAAPVR. In terms of domain architecture, CSD2 spans 371–438; sequence ALFVSKDRRI…ETEVVLIEND (68 aa). In terms of domain architecture, RNB spans 469–798; that stretch reads RQDLRHLLVF…FVHRLLAASL (330 aa). Residues Asp481 and Asp490 each coordinate Mg(2+).

Belongs to the RNR ribonuclease family. As to quaternary structure, probable component of the RNA exosome complex. Requires Mg(2+) as cofactor.

Its subcellular location is the nucleus. Functionally, catalytic component of the RNA exosome complex which has 3'-&gt;5' exoribonuclease activity and participates in a multitude of cellular RNA processing and degradation events. Required for 5.8S rRNA intermediate processing and the degradation of 5' external transcribed spacer (5' ETS), a maturation by-product of rRNA synthesis. Is not involved in the degradation of turnip crinkle virus (TCV) RNA and significant virus resistance. Required for normal development of female gametophytes and early embryogenesis. The polypeptide is Exosome complex exonuclease RRP44 homolog A (Arabidopsis thaliana (Mouse-ear cress)).